A 587-amino-acid polypeptide reads, in one-letter code: DELLA protein RGA (587 aa).

A disordered region spans residues 1–26 (MKRDHHQFQGRLSNHGTSSSSSSISK). Positions 44 to 48 (DELLA) match the DELLA motif motif. Positions 66–70 (LEQLE) match the LEXLE motif motif. The short motif at 89–93 (VHYNP) is the VHYNP motif element. A disordered region spans residues 152-181 (IDSSSSSNNQNKRLKSCSSPDSMVTSTSTG). The span at 153 to 175 (DSSSSSNNQNKRLKSCSSPDSMV) shows a compositional bias: polar residues. The GRAS domain maps to 212-581 (VDSQENGVRL…RPLITTSAWK (370 aa)). Positions 219 to 273 (VRLVHALMACAEAIQQNNLTLAEALVKQIGCLAVSQAGAMRKVATYFAEALARRI) are leucine repeat I (LRI). The VHIID stretch occupies residues 292-357 (QMHFYETCPY…GGPPTFRLTG (66 aa)). Positions 323-327 (VHVID) match the VHIID motif. Residues 371–403 (EVGCKLAQLAEAIHVEFEYRGFVANSLADLDAS) are leucine repeat II (LRII). The segment at 415–502 (VAVNSVFELH…EVYLGKQICN (88 aa)) is PFYRE. Residues 423 to 427 (LHKLL) carry the LXXLL motif motif. The tract at residues 505 to 581 (ACEGPDRVER…RPLITTSAWK (77 aa)) is SAW.

This sequence belongs to the GRAS family. DELLA subfamily. Interacts directly with the GID2/SLY1 component of the SCF(GID2) complex. Interacts (via N-terminus) with GID1A, GID1B and GID1B (via N-terminus). Binds to bHLH transcription factors such as MYC2, PIF1, PIF4, PIF6 and SPT. Interacts with the BOI proteins BOI, BRG1, BRG2 and BRG3. Interacts with NFYC9. Interacts with TOPP4. Interacts with FLZ5. Binds to zinc finger proteins MGP/IDD3, IDD4, IDD5, BIB/IDD9 and JKD/IDD10 in the nucleus. Binds to and coactivates GAF1/IDD2 and ENY/IDD1. Binds to PDF2 and ATML1. Phosphorylated. Phosphorylation may increase the interaction with GID2. In terms of processing, gibberellin (GA) induces dephosphorylation of RGA by TOPP4 and subsequent degradation by the proteasomal pathway. Post-translationally, ubiquitinated. Upon GA application it is ubiquitinated by the SCF(GID2) complex, leading to its subsequent degradation. O-fucosylated by SPY. O-fucosylation enhances RGA activity by promoting RGA binding to key transcription factors in brassinosteroid and light signaling pathways. As to expression, ubiquitously expressed. Expressed in roots, rosette leaves, bolting and mature stems, young and mature siliques, flower buds and influorescences.

It localises to the nucleus. In terms of biological role, probable transcriptional regulator that acts as a repressor of the gibberellin (GA) signaling pathway. Probably acts by participating in large multiprotein complexes that repress transcription of GA-inducible genes. Positively regulates XERICO expression in seeds. Upon GA application, it is degraded by the proteasome, allowing the GA signaling pathway. Compared to other DELLA proteins, it is the most sensitive to GA application. No effect of the BOI proteins on its stability. Its activity is probably regulated by other phytohormones such as auxin and ethylene, attenuation of auxin transport delaying its GA-induced degradation. Involved in the regulation of seed dormancy and germination, including glucose-induced delay of seed germination. This chain is DELLA protein RGA, found in Arabidopsis thaliana (Mouse-ear cress).